The primary structure comprises 959 residues: MTEPKSYKDTVNLPQTDFSMRANAVQREPEIQQFWTENCIYEQLSQNNPEDLFILHDGPPYANGSLHMGHALNKTLKDIINKYKLLRGHKVRYVPGWDCHGLPIELKVLQSMKSEEREGLTPLKLRRKARDFALKTQQEQAEGFKRYGVWGDWENPYLTLTPEYEAAQIGVFGQMALKGYIYRGLKPVHWSPSSRTALAEAELEYPEGHTSQSIFAAFPIIKSSKDAQEILDPFLSNLGVAIWTTTPWTLPGNLAVALNPELTYAIVEQTSNLCNYQYIIVAADLVERLSATFSTELTVKATLPGQILEHTIYRHPLYDRESEIVIGGDYVTTESGTGLVHTAPGHGQEDYIVGQRYGLQVLSPVDDAGNFTEEAGQFSGLNVLKDANQAIINELKNKGSLLKEEPYLHKYPYDWRTKKPTIFRATEQWFASVEGFREAALEAIKSVNWIPPQGENRITPMVSDRSDWCISRQRSWGVPIPVFYNEETNEPLLTEETINHVQAIIAKQGSDAWWELSIEELLPEQYKKDAHKYRRGTDTMDVWFDSGSSWAAVAKQREELKYPVDIYLEGSDQHRGWFQSSLLTSVAVNGIAPYKTVLTHGFVLDEKGHKMSKSLGNIVDPLVIINGGKNQKQEPPYGADVLRLWVSSVDYSSDVPIGQTILKQLSDVYRKIRNTARFLLGNLHDFDPEKDTVSYDQLPELDQYMLHRITEVFTEVTDAFEKFQFFRFFQTVQNFCVVDLSNFYLDIAKDRLYISDTNSLRRRSCQTVLKVAVESLAKAIAPVLCHMAEDIWQFLPYKTPYQSVFASGWVEMQKQWERPELTASWGKLRQIRTEVNKVLEQARNEKAIGSSLDAKVLLYVSDQDFKKQLESFNPNDSLKGNQVDELRYLVLASQVELVDSLEAIKKADYQSESELVSVGVVKAEGQKCDRCWNYSTKVGEFSDDPTICERCNAALVGEF.

The 'HIGH' region signature appears at 60 to 70 (PYANGSLHMGH). Position 569 (glutamate 569) interacts with L-isoleucyl-5'-AMP. A 'KMSKS' region motif is present at residues 610–614 (KMSKS). Position 613 (lysine 613) interacts with ATP. The Zn(2+) site is built by cysteine 928, cysteine 931, cysteine 948, and cysteine 951.

It belongs to the class-I aminoacyl-tRNA synthetase family. IleS type 1 subfamily. Monomer. Requires Zn(2+) as cofactor.

It is found in the cytoplasm. The catalysed reaction is tRNA(Ile) + L-isoleucine + ATP = L-isoleucyl-tRNA(Ile) + AMP + diphosphate. Catalyzes the attachment of isoleucine to tRNA(Ile). As IleRS can inadvertently accommodate and process structurally similar amino acids such as valine, to avoid such errors it has two additional distinct tRNA(Ile)-dependent editing activities. One activity is designated as 'pretransfer' editing and involves the hydrolysis of activated Val-AMP. The other activity is designated 'posttransfer' editing and involves deacylation of mischarged Val-tRNA(Ile). The protein is Isoleucine--tRNA ligase of Rippkaea orientalis (strain PCC 8801 / RF-1) (Cyanothece sp. (strain PCC 8801)).